A 1071-amino-acid polypeptide reads, in one-letter code: DNA-directed RNA polymerase subunit beta (1071 aa).

This sequence belongs to the RNA polymerase beta chain family. As to quaternary structure, in plastids the minimal PEP RNA polymerase catalytic core is composed of four subunits: alpha, beta, beta', and beta''. When a (nuclear-encoded) sigma factor is associated with the core the holoenzyme is formed, which can initiate transcription.

It is found in the plastid. Its subcellular location is the chloroplast. The catalysed reaction is RNA(n) + a ribonucleoside 5'-triphosphate = RNA(n+1) + diphosphate. DNA-dependent RNA polymerase catalyzes the transcription of DNA into RNA using the four ribonucleoside triphosphates as substrates. This Acorus gramineus (Dwarf sweet flag) protein is DNA-directed RNA polymerase subunit beta.